Reading from the N-terminus, the 401-residue chain is 26S proteasome regulatory subunit 6A (401 aa).

189 to 196 lines the ATP pocket; sequence GPPGTGKT.

Belongs to the AAA ATPase family. As to quaternary structure, the 26S proteasome consists of a 20S proteasome core and two 19S regulatory subunits. The 20S proteasome core is composed of 28 subunits that are arranged in four stacked rings, resulting in a barrel-shaped structure. The two end rings are each formed by seven alpha subunits, and the two central rings are each formed by seven beta subunits. The catalytic chamber with the active sites is on the inside of the barrel.

The protein localises to the cytoplasm. It localises to the nucleus. In terms of biological role, acts as a regulatory subunit of the 26S proteasome which degrades poly-ubiquitinated proteins in the cytoplasm and in the nucleus. It is essential for the regulated turnover of proteins and for the removal of misfolded proteins. The proteasome is a multicatalytic proteinase complex that is characterized by its ability to cleave peptides with Arg, Phe, Tyr, Leu, and Glu adjacent to the leaving group at neutral or slightly basic pH. The sequence is that of 26S proteasome regulatory subunit 6A (RPT5) from Encephalitozoon cuniculi (strain GB-M1) (Microsporidian parasite).